The chain runs to 167 residues: Lipoprotein signal peptidase (167 aa).

4 helical membrane passes run 8–28, 46–66, 68–88, and 101–121; these read TFLTLLLLASIDWVSKLVVLL, WGHFSFLIIPSFNEGAAFGLF, QYKIPLLIFRVCVILGLALFL, and IALTLILAGALGNVGDILLHG. Residues aspartate 125 and aspartate 143 contribute to the active site. Residues 139–159 traverse the membrane as a helical segment; sequence FNLADAFISIGTLLLIGHLYF.

It belongs to the peptidase A8 family.

It localises to the cell inner membrane. It catalyses the reaction Release of signal peptides from bacterial membrane prolipoproteins. Hydrolyzes -Xaa-Yaa-Zaa-|-(S,diacylglyceryl)Cys-, in which Xaa is hydrophobic (preferably Leu), and Yaa (Ala or Ser) and Zaa (Gly or Ala) have small, neutral side chains.. It participates in protein modification; lipoprotein biosynthesis (signal peptide cleavage). Its function is as follows. This protein specifically catalyzes the removal of signal peptides from prolipoproteins. The protein is Lipoprotein signal peptidase of Chlamydia trachomatis serovar L2b (strain UCH-1/proctitis).